The following is a 132-amino-acid chain: MVMTDPIADYLTRIRNANMAKHDSVEIPASNIKKSISEILKREGFIRDYEVADDNKQGVIKVFLKYGPNGERVISGLKRISKPGLRNYVSAEDLPKVLNGLGIAIVSTSAGVITDKEARQKNVGGEVIAYVW.

Belongs to the universal ribosomal protein uS8 family. As to quaternary structure, part of the 30S ribosomal subunit. Contacts proteins S5 and S12.

In terms of biological role, one of the primary rRNA binding proteins, it binds directly to 16S rRNA central domain where it helps coordinate assembly of the platform of the 30S subunit. In Lactobacillus helveticus (strain DPC 4571), this protein is Small ribosomal subunit protein uS8.